The following is a 344-amino-acid chain: BURP domain-containing protein 16 (344 aa).

The N-terminal stretch at 1–25 (MATSFLFSLILLLITALSLPFPLHA) is a signal peptide. N-linked (GlcNAc...) asparagine glycans are attached at residues Asn90, Asn120, Asn181, and Asn333. One can recognise a BURP domain in the interval 128–341 (FFREQELKEG…FNGSMTWVIA (214 aa)).

In terms of tissue distribution, expressed in roots, stems, leaves and panicles.

The sequence is that of BURP domain-containing protein 16 (BURP16) from Oryza sativa subsp. japonica (Rice).